Consider the following 462-residue polypeptide: Argininosuccinate lyase (462 aa).

This sequence belongs to the lyase 1 family. Argininosuccinate lyase subfamily.

It localises to the cytoplasm. It carries out the reaction 2-(N(omega)-L-arginino)succinate = fumarate + L-arginine. Its pathway is amino-acid biosynthesis; L-arginine biosynthesis; L-arginine from L-ornithine and carbamoyl phosphate: step 3/3. The polypeptide is Argininosuccinate lyase (Bacillus thuringiensis (strain Al Hakam)).